The sequence spans 317 residues: Mitochondrial outer membrane protein porin 4 (317 aa).

The segment at 1–30 (MEAETECKVPGVYSETGIPVEDPAPGLNSD) is disordered.

Belongs to the eukaryotic mitochondrial porin (TC 1.B.8.1) family.

Its subcellular location is the mitochondrion outer membrane. Its function is as follows. Forms a channel through the mitochondrial outer membrane that allows diffusion of small hydrophilic molecules. The channel adopts an open conformation at low or zero membrane potential and a closed conformation at potentials above 30-40 mV. The open state has a weak anion selectivity whereas the closed state is cation-selective. This chain is Mitochondrial outer membrane protein porin 4 (VDAC4), found in Oryza sativa subsp. japonica (Rice).